The sequence spans 181 residues: MAIDKSKRFLRKTGRKTLVSQNPYHALLVKLYRFLARRTNSKFNKVVLKRLLQTKTNRPPVSISRIANLMKDRKSGKIAVCVGTVVDDERLLDCPKLTVCALRFTETARSRIVKAGGKALSFDQFALVRPRGNNTFLIKGVTKAREVYKHFGRAPGLPGSHARPYVRSEGIKFQRSKTRNP.

The protein belongs to the eukaryotic ribosomal protein eL18 family.

The protein resides in the cytoplasm. The sequence is that of Large ribosomal subunit protein eL18 (rpl18) from Dictyostelium discoideum (Social amoeba).